The chain runs to 182 residues: MTLEQLIPLIIMAFALGMDAFSVSLGMGMVTLKLRQILYIGMTIGIFHIIMPFIGMVLGRFLSERYGDVANFAGAILLIGLGFYIVYSSILEGEETRTAPIGISLFVFAFGVSIDSFSVGLSLGIYGAETIITILLFGLISMLLAWMGLLLGSHAKNILGTYGEIVGGIILVGFGLYLLFPI.

6 helical membrane passes run 6-26 (LIPL…VSLG), 37-57 (ILYI…IGMV), 72-92 (FAGA…SILE), 101-121 (IGIS…SVGL), 131-151 (IITI…GLLL), and 162-182 (YGEI…LFPI).

It belongs to the MntP (TC 9.B.29) family.

The protein localises to the cell membrane. In terms of biological role, probably functions as a manganese efflux pump. The chain is Putative manganese efflux pump MntP from Bacillus mycoides (strain KBAB4) (Bacillus weihenstephanensis).